The chain runs to 2320 residues: MAEPSSARRPVPLIESELYFLIARYLSAGPCRRAAQVLVQELEQYQLLPKRLDWEGNEHNRSYEELVLSNKHVAPDHLLQICQRIGPMLDKEIPPSISRVTSLLGAGRQSLLRTAKDCRHTVWKGSAFAALHRGRPPEMPVNYGSPPNLVEIHRGKQLTGCSTFSTAFPGTMYQHIKMHRRILGHLSAVYCVAFDRTGHRIFTGSDDCLVKIWSTHNGRLLSTLRGHSAEISDMAVNYENTMIAAGSCDKIIRVWCLRTCAPVAVLQGHTGSITSLQFSPMAKGSQRYMVSTGADGTVCFWQWDLESLKFSPRPLKFTEKPRPGVQMLCSSFSVGGMFLATGSTDHVIRMYFLGFEAPEKIAELESHTDKVDSIQFCNNGDRFLSGSRDGTARIWRFEQLEWRSILLDMATRISGDLSSEEERFMKPKVTMIAWNQNDSIVVTAVNDHVLKVWNSYTGQLLHNLMGHADEVFVLETHPFDSRIMLSAGHDGSIFIWDITKGTKMKHYFNMIEGQGHGAVFDCKFSQDGQHFACTDSHGHLLIFGFGCSKPYEKIPDQMFFHTDYRPLIRDSNNYVLDEQTQQAPHLMPPPFLVDVDGNPHPTKYQRLVPGRENSADEHLIPQLGYVATSDGEVIEQIISLQTNDNDERSPESSILDGMIRQLQQQQDQRMGADQDTIPRGLSNGEETPRRGFRRLSLDIQSPPNIGLRRSGQVEGVRQMHQNAPRSQIATERDLQAWKRRVVVPEVPLGIFRKLEDFRLEKGEEERNLYIIGRKRKTLQLSHKSDSVVLVSQSRQRTCRRKYPNYGRRNRSWRELSSGNESSSSVRHETSCDQSEGSGSSEEDEWRSDRKSESYSESSSDSSSRYSDWTADAGINLQPPLRTSCRRRITRFCSSSEDEISTENLSPPKRRRKRKKENKPKKENLRRMTPAELANMEHLYEFHPPVWITDTTLRKSPFVPQMGDEVIYFRQGHEAYIEAVRRNNIYELNPNKEPWRKMDLRDQELVKIVGIRYEVGPPTLCCLKLAFIDPATGKLMDKSFSIRYHDMPDVIDFLVLRQFYDEARQRNWQSCDRFRSIIDDAWWFGTVLSQEPYQPQYPDSHFQCYIVRWDNTEIEKLSPWDMEPIPDNVDPPEELGASISVTTDELEKLLYKPQAGEWGQKSRDEECDRIISGIDQLLNLDIAAAFAGPVDLCTYPKYCTVVAYPTDLYTIRMRLVNRFYRRLSALVWEVRYIEHNARTFNEPESVIARSAKKITDQLLKFIKNQHCTNISELSNTSENDEQNAEDLDDSDLPKTSSGRRRVHDGKKSIRATNYVESNWKKQCKELVNLIFQCEDSEPFRQPVDLVEYPDYRDIIDTPMDFGTVRETLDAGNYDSPLEFCKDIRLIFSNAKAYTPNKRSKIYSMTLRLSALFEEKMKKISSDFKIGQKFNEKLRRSQRFKQRQNCKGDSQPNKSIRNLKPKRLKSQTKIIPELVGSPTQSTSSRTAYLGTHKTSAGISSGVTSGDSSDSAESSERRKRNRPITNGSTLSESEVEDSLATSLSSSASSSSEESKESSRARESSSRSGLSRSSNLRVTRTRAAQRKTGPVSLANGCGRKATRKRVYLSDSDNNSLETGEILKARAGNNRKVLRKCAAVAANKIKLMSDVEENSSSESVCSGRKLPHRNASAVARKKLLHNSEDEQSLKSEIEEEELKDENQLLPVSSSHTAQSNVDESENRDSESESDLRVARKNWHANGYKSHTPAPSKTKFLKIESSEEDSKSHDSDHACNRTAGPSTSVQKLKAESISEEADSEPGRSGGRKYNTFHKNASFFKKTKILSDSEDSESEEQDREDGKCHKMEMNPISGNLNCDPIAMSQCSSDHGCETDLDSDDDKIEKPNNFMKDSASQDNGLSRKISRKRVCSSDSDSSLQVVKKSSKARTGLLRITRRCAATAANKIKLMSDVEDVSLENVHTRSKNGRKKPLHLACTTAKKKLSDCEGSVHCEVPSEQYACEGKPPDPDSEGSTKVLSQALNGDSDSEDMLNSEHKHRHTNIHKIDAPSKRKSSSVTSSGEDSKSHIPGSETDRTFSSESTLAQKATAENNFEVELNYGLRRWNGRRLRTYGKAPFSKTKVIHDSQETAEKEVKRKRSHPELENVKISETTGNSKFRPDTSSKSSDLGSVTESDIDCTDNTKTKRRKTKGKAKVVRKEFVPRDREPNTKVRTCMHNQKDAVQMPSETLKAKMVPEKVPRRCATVAANKIKIMSNLKETISGPENVWIRKSSRKLPHRNASAAAKKKLLNVYKEDDTTINSESEKELEDINRKMLFLRGFRSWKENAQ.

8 WD repeats span residues Gly-184–Thr-223, Gly-226–Val-265, Gly-268–Ser-311, Arg-322–Glu-365, Ser-366–Ile-405, Phe-424–Asn-463, Gly-466–His-506, and Gln-514–Lys-553. A disordered region spans residues Gln-668–Gly-691. Phosphothreonine is present on Thr-687. 3 positions are modified to phosphoserine: Ser-696, Ser-701, and Ser-710. Disordered regions lie at residues Asn-809 to Asp-867 and Ser-895 to Arg-925. 2 stretches are compositionally biased toward low complexity: residues Glu-814–Ser-824 and Tyr-854–Asp-867. A compositionally biased stretch (basic residues) spans Pro-907–Lys-918. The 108-residue stretch at Trp-1157 to Gln-1264 folds into the Bromo 1 domain. Residues Glu-1271–Gly-1304 form a disordered region. Acidic residues predominate over residues Glu-1277–Ser-1289. Position 1289 is a phosphoserine (Ser-1289). The Bromo 2 domain maps to Tyr-1313–Ile-1418. The tract at residues Arg-1434 to Cys-1593 is disordered. A compositionally biased stretch (polar residues) spans Asn-1443–Ile-1454. Positions Arg-1455–Ser-1464 are enriched in basic residues. A Phosphoserine modification is found at Ser-1475. Residues Ser-1475–Ile-1496 show a composition bias toward polar residues. Thr-1477 is subject to Phosphothreonine. The residue at position 1479 (Ser-1479) is a Phosphoserine. Residues Ser-1497–Ala-1509 are compositionally biased toward low complexity. Residues Pro-1520–Glu-1529 are compositionally biased toward polar residues. Low complexity predominate over residues Ser-1535–Ser-1548. The segment covering Glu-1549 to Ser-1561 has biased composition (basic and acidic residues). A phosphoserine mark is found at Ser-1605, Ser-1607, Ser-1678, Ser-1683, and Ser-1686. 3 disordered regions span residues Ala-1670–Thr-1805, Lys-1817–Lys-1839, and Asp-1862–Arg-1899. A compositionally biased stretch (basic and acidic residues) spans His-1676–Glu-1687. Polar residues predominate over residues Pro-1701–Val-1712. Basic and acidic residues-rich tracts occupy residues Ser-1715–Val-1728 and Leu-1751–Cys-1769. 6 positions are modified to phosphoserine: Ser-1755, Ser-1756, Ser-1786, Ser-1788, Ser-1793, and Ser-1820. Residues Asp-1821–Arg-1832 are compositionally biased toward acidic residues. Position 1867 is a phosphothreonine (Thr-1867). 6 positions are modified to phosphoserine: Ser-1871, Ser-1904, Ser-1905, Ser-1907, Ser-1910, and Ser-1943. Thr-1955 is modified (phosphothreonine). Disordered stretches follow at residues Leu-2014 to Gln-2077 and Thr-2112 to Lys-2184. Ser-2018, Ser-2020, and Ser-2052 each carry phosphoserine. Composition is skewed to basic and acidic residues over residues Glu-2054–Phe-2069 and Val-2114–Lys-2139. Positions Ile-2140–Glu-2165 are enriched in polar residues. At Thr-2164 the chain carries Phosphothreonine. 2 positions are modified to phosphoserine: Ser-2166 and Val-2214.

In terms of assembly, interacts with SMARCA4. Ubiquitously expressed. Expressed in respiratory epithelial cells and testis spermatozoa.

The protein localises to the cytoplasm. Its subcellular location is the nucleus. It localises to the cell projection. It is found in the cilium membrane. The protein resides in the cytoskeleton. The protein localises to the flagellum axoneme. Its function is as follows. May be a transcriptional activator. May be involved in chromatin remodeling. Plays a role in the regulation of cell morphology and cytoskeletal organization. Required in the control of cell shape. This is Bromodomain and WD repeat-containing protein 1 (BRWD1) from Homo sapiens (Human).